The sequence spans 471 residues: Ribulose bisphosphate carboxylase large chain 2 (471 aa).

Substrate-binding residues include Asn116 and Thr166. Lys168 acts as the Proton acceptor in catalysis. Lys170 is a substrate binding site. Positions 194, 196, and 197 each coordinate Mg(2+). The residue at position 194 (Lys194) is an N6-carboxylysine. Catalysis depends on His287, which acts as the Proton acceptor. Arg288, His320, and Ser372 together coordinate substrate.

The protein belongs to the RuBisCO large chain family. Type I subfamily. In terms of assembly, heterohexadecamer of 8 large chains and 8 small chains; disulfide-linked. The disulfide link is formed within the large subunit homodimers. It depends on Mg(2+) as a cofactor. In terms of processing, the disulfide bond which can form in the large chain dimeric partners within the hexadecamer appears to be associated with oxidative stress and protein turnover.

The enzyme catalyses 2 (2R)-3-phosphoglycerate + 2 H(+) = D-ribulose 1,5-bisphosphate + CO2 + H2O. It catalyses the reaction D-ribulose 1,5-bisphosphate + O2 = 2-phosphoglycolate + (2R)-3-phosphoglycerate + 2 H(+). Functionally, ruBisCO catalyzes two reactions: the carboxylation of D-ribulose 1,5-bisphosphate, the primary event in carbon dioxide fixation, as well as the oxidative fragmentation of the pentose substrate. Both reactions occur simultaneously and in competition at the same active site. The polypeptide is Ribulose bisphosphate carboxylase large chain 2 (Allochromatium vinosum (strain ATCC 17899 / DSM 180 / NBRC 103801 / NCIMB 10441 / D) (Chromatium vinosum)).